A 529-amino-acid chain; its full sequence is Laccase-1 (529 aa).

The first 23 residues, 1-23, serve as a signal peptide directing secretion; the sequence is MFPGARILATLTLALHLLHGTHA. 3 consecutive Plastocyanin-like domains span residues 25–159, 170–312, and 380–499; these read IGPT…FIVY, DVDN…ILRY, and TAPV…FAED. Asn57 carries N-linked (GlcNAc...) asparagine glycosylation. The Cu cation site is built by His96, His98, His141, and His143. 2 cysteine pairs are disulfide-bonded: Cys117–Cys514 and Cys149–Cys236. Residues Asn239 and Asn282 are each glycosylated (N-linked (GlcNAc...) asparagine). His425, His428, His430, His481, Cys482, His483, and His487 together coordinate Cu cation.

It belongs to the multicopper oxidase family. Cu cation is required as a cofactor.

Its subcellular location is the secreted. The enzyme catalyses 4 hydroquinone + O2 = 4 benzosemiquinone + 2 H2O. Its function is as follows. Lignin degradation and detoxification of lignin-derived products. The polypeptide is Laccase-1 (POX1) (Pleurotus ostreatus (Oyster mushroom)).